The primary structure comprises 428 residues: Histidine--tRNA ligase (428 aa).

This sequence belongs to the class-II aminoacyl-tRNA synthetase family. Homodimer.

The protein localises to the cytoplasm. It catalyses the reaction tRNA(His) + L-histidine + ATP = L-histidyl-tRNA(His) + AMP + diphosphate + H(+). This Chlamydia trachomatis serovar L2 (strain ATCC VR-902B / DSM 19102 / 434/Bu) protein is Histidine--tRNA ligase.